The chain runs to 264 residues: Thymidylate synthase (264 aa).

Residue R21 coordinates dUMP. Position 51 (H51) interacts with (6R)-5,10-methylene-5,6,7,8-tetrahydrofolate. Residue R126–R127 coordinates dUMP. C146 acts as the Nucleophile in catalysis. DUMP-binding positions include R166 to D169, N177, and H207 to Y209. (6R)-5,10-methylene-5,6,7,8-tetrahydrofolate is bound at residue D169. A263 is a binding site for (6R)-5,10-methylene-5,6,7,8-tetrahydrofolate.

This sequence belongs to the thymidylate synthase family. Bacterial-type ThyA subfamily. Homodimer.

The protein localises to the cytoplasm. It catalyses the reaction dUMP + (6R)-5,10-methylene-5,6,7,8-tetrahydrofolate = 7,8-dihydrofolate + dTMP. It participates in pyrimidine metabolism; dTTP biosynthesis. Catalyzes the reductive methylation of 2'-deoxyuridine-5'-monophosphate (dUMP) to 2'-deoxythymidine-5'-monophosphate (dTMP) while utilizing 5,10-methylenetetrahydrofolate (mTHF) as the methyl donor and reductant in the reaction, yielding dihydrofolate (DHF) as a by-product. This enzymatic reaction provides an intracellular de novo source of dTMP, an essential precursor for DNA biosynthesis. The polypeptide is Thymidylate synthase (Escherichia fergusonii (strain ATCC 35469 / DSM 13698 / CCUG 18766 / IAM 14443 / JCM 21226 / LMG 7866 / NBRC 102419 / NCTC 12128 / CDC 0568-73)).